The primary structure comprises 71 residues: Immune-induced peptide 18 (71 aa).

Residues Met-1 to Ala-24 form the signal peptide. Residues Ser-25–Pro-26 constitute a propeptide that is removed on maturation. A disordered region spans residues Pro-26–Ala-71. The span at Pro-32–Ser-42 shows a compositional bias: gly residues.

As to expression, hemolymph (at protein level).

The protein localises to the secreted. The protein is Immune-induced peptide 18 (IM18) of Drosophila melanogaster (Fruit fly).